Reading from the N-terminus, the 355-residue chain is IgG receptor FcRn large subunit p51 (355 aa).

A signal peptide spans 1 to 24 (MRVPRSQPWGLALLLLLLPGTLRA). An alpha-1 region spans residues 25–111 (AESHRSLLYH…ALKVFGDRDS (87 aa)). Topologically, residues 25–300 (AESHRSLLYH…LESPAKSSVP (276 aa)) are extracellular. The interval 112–201 (YTLQGLLGCE…ERGRGNLEWK (90 aa)) is alpha-2. N-linked (GlcNAc...) asparagine glycosylation occurs at Asn-126. The alpha-3 stretch occupies residues 202-291 (EPPSMRLKAR…GPAQPLTVEL (90 aa)). The region spanning 203-292 (PPSMRLKARP…PAQPLTVELE (90 aa)) is the Ig-like C1-type domain. Cys-222 and Cys-276 are oxidised to a cystine. Residues 293-298 (SPAKSS) form a connecting peptide region. The helical transmembrane segment at 301–321 (VIGISIGFLLLMTVAAGGALL) threads the bilayer. Over 322 to 355 (WRRRKGLPAPWIAFRGDDIGALLPTPGLSKDAES) the chain is Cytoplasmic.

Belongs to the immunoglobulin superfamily. FcRn complex consists of two subunits: p51, and p14 which is equivalent to beta-2-microglobulin. It forms an MHC class I-like heterodimer. Interacts with albumin/ALB; this interaction regulates ALB homeostasis. Expressed in liver and mammary gland of non-lactating animals. Expressed in hepatocytes and in epithelial cells of portal bile ductuli. Not expressed in the brances of portal veins or hepatic arteries. Expressed in the epithelial cells of the acini and ducti in the mammary gland with expression emphasized at the apical side. Not expressed in blood vessels of mammary gland.

Its subcellular location is the cell membrane. The protein resides in the endosome membrane. In terms of biological role, cell surface receptor that transfers passive humoral immunity from the mother to the newborn. Binds to the Fc region of monomeric immunoglobulin gamma and mediates its selective uptake from milk. IgG in the milk is bound at the apical surface of the intestinal epithelium. The resultant FcRn-IgG complexes are transcytosed across the intestinal epithelium and IgG is released from FcRn into blood or tissue fluids. Throughout life, contributes to effective humoral immunity by recycling IgG and extending its half-life in the circulation. Mechanistically, monomeric IgG binding to FcRn in acidic endosomes of endothelial and hematopoietic cells recycles IgG to the cell surface where it is released into the circulation. In addition of IgG, regulates homeostasis of the other most abundant circulating protein albumin/ALB. The chain is IgG receptor FcRn large subunit p51 from Camelus dromedarius (Dromedary).